Reading from the N-terminus, the 457-residue chain is MALWGGRFTQAADQRFKQFNDSLRFDYRLAEQDIVGSVAWSKALVTVGVLTAEEQAQLEEALNVLLEDVRARPQQILESDAEDIHSWVEGKLIDKVGQLGKKLHTGRSRNDQVATDLKLWCKDTVSELLTANRQLQSALVETAQNNQDAVMPGYTHLQRAQPVTFAHWCLAYVEMLARDESRLQDALKRLDVSPLGCGALAGTAYEIDREQLAGWLGFASATRNSLDSVSDRDHVLELLSAAAIGMVHLSRFAEDLIFFNTGEAGFVELSDRVTSGSSLMPQKKNPDALELIRGKCGRVQGALTGMMMTLKGLPLAYNKDMQEDKEGLFDALDTWLDCLHMAALVLDGIQVKRPRCQEAAQQGYANATELADYLVAKGVPFREAHHIVGEAVVEAIRQGKPLEELPLTELQKFSPVIGEDVYPILSLQSCLDKRAAKGGVSPQQVAQAIAFARARLG.

The protein belongs to the lyase 1 family. Argininosuccinate lyase subfamily.

The protein resides in the cytoplasm. The catalysed reaction is 2-(N(omega)-L-arginino)succinate = fumarate + L-arginine. Its pathway is amino-acid biosynthesis; L-arginine biosynthesis; L-arginine from L-ornithine and carbamoyl phosphate: step 3/3. The sequence is that of Argininosuccinate lyase from Escherichia coli O157:H7 (strain EC4115 / EHEC).